A 184-amino-acid chain; its full sequence is GMP synthase [glutamine-hydrolyzing] subunit A (184 aa).

The Glutamine amidotransferase type-1 domain occupies 3-184 (RIVVVDNHGQ…ENFRDICAGD (182 aa)). The active-site Nucleophile is the cysteine 73. Active-site residues include histidine 161 and glutamate 163.

In terms of assembly, heterodimer composed of a glutamine amidotransferase subunit (A) and a GMP-binding subunit (B).

The enzyme catalyses XMP + L-glutamine + ATP + H2O = GMP + L-glutamate + AMP + diphosphate + 2 H(+). It functions in the pathway purine metabolism; GMP biosynthesis; GMP from XMP (L-Gln route): step 1/1. In terms of biological role, catalyzes the synthesis of GMP from XMP. This chain is GMP synthase [glutamine-hydrolyzing] subunit A, found in Natronomonas pharaonis (strain ATCC 35678 / DSM 2160 / CIP 103997 / JCM 8858 / NBRC 14720 / NCIMB 2260 / Gabara) (Halobacterium pharaonis).